The chain runs to 120 residues: MASRKEALARRANRVRRHLKSVANGRPRLSVHRSSKNIYAQVIDDVAGKTLASASTLEKDLRGSLKTGADTAAATVVGKLLAERASKAGVTEVVFDRGAFIYHGRIKALAEAAREGGLTF.

This sequence belongs to the universal ribosomal protein uL18 family. Part of the 50S ribosomal subunit; part of the 5S rRNA/L5/L18/L25 subcomplex. Contacts the 5S and 23S rRNAs.

In terms of biological role, this is one of the proteins that bind and probably mediate the attachment of the 5S RNA into the large ribosomal subunit, where it forms part of the central protuberance. The polypeptide is Large ribosomal subunit protein uL18 (Rhizobium johnstonii (strain DSM 114642 / LMG 32736 / 3841) (Rhizobium leguminosarum bv. viciae)).